We begin with the raw amino-acid sequence, 1483 residues long: Tyrosine-protein kinase BAZ1B (1483 aa).

The WAC domain occupies 20–126 (EPLFTIPHTQ…GEECDFEVGK (107 aa)). The interval 145-212 (EEATEKKSDG…TSLKKGERKW (68 aa)) is disordered. 2 stretches are compositionally biased toward basic and acidic residues: residues 148 to 165 (TEKKSDGACDSPSSDKEN) and 172 to 195 (DHQKKETVVKEDEGRRESINDRAR). Phosphoserine occurs at positions 152, 158, and 161. Residues 207–213 (KGERKWA) carry the C motif motif. The residue at position 266 (Thr266) is a Phosphothreonine. The interval 302–333 (NPSTKRKNTGSPDRKPSKKSKTDNSSLSSPLN) is disordered. Ser330, Ser345, Ser347, Ser349, Ser361, and Ser374 each carry phosphoserine. Disordered stretches follow at residues 379-432 (HTNF…KTPK) and 446-470 (GTQKMTRAPRNSGGTPRTSSKPHKH). Composition is skewed to basic residues over residues 384 to 395 (IPKKGPPAKKPG) and 423 to 432 (SPKKGLKTPK). The stretch at 533-586 (KRWASMSEEQRKEYLKKKREELKKKLKEKAKERREKEMLERLEKQKRYEDQELT) forms a coiled coil. In terms of domain architecture, DDT spans 604–668 (NTLFGDVAMV…LQTLLQDEIA (65 aa)). 4 positions are modified to phosphoserine: Ser699, Ser705, Ser708, and Ser716. Positions 768–814 (TRQQMSAELWKERLAVLKEENDKKRAEKQKRKEMEAKNKENGKVENG) form a coiled coil. Positions 788-810 (NDKKRAEKQKRKEMEAKNKENGK) are enriched in basic and acidic residues. The disordered stretch occupies residues 788 to 817 (NDKKRAEKQKRKEMEAKNKENGKVENGLGK). Lys826 is covalently cross-linked (Glycyl lysine isopeptide (Lys-Gly) (interchain with G-Cter in SUMO1); alternate). Lys826 is covalently cross-linked (Glycyl lysine isopeptide (Lys-Gly) (interchain with G-Cter in SUMO2); alternate). The stretch at 850 to 893 (IQAKKEREIQEREMKVKLERQAEEERIRKHKAAAEKAFQEGIAK) forms a coiled coil. Lys853 is covalently cross-linked (Glycyl lysine isopeptide (Lys-Gly) (interchain with G-Cter in SUMO2)). Ser947 is subject to Phosphoserine. Glycyl lysine isopeptide (Lys-Gly) (interchain with G-Cter in SUMO2) cross-links involve residues Lys1043, Lys1089, and Lys1107. A PHD-type zinc finger spans residues 1184–1234 (NARCKVCRKKGEDDKLILCDECNKAFHLFCLRPALYEVPDGEWQCPACQPA). The segment at 1237 to 1326 (RRNSRGRNYT…PKAPPVDDAE (90 aa)) is disordered. Residues 1245–1283 (YTEESASEDSEDDESDEEEEEEEEEEEEEDYEVAGLRLR) are a coiled coil. A compositionally biased stretch (acidic residues) spans 1249–1276 (SASEDSEDDESDEEEEEEEEEEEEEDYE). Composition is skewed to basic residues over residues 1282-1292 (LRPRKTIRGKH) and 1301-1316 (SGRRPGKKPHSTRRSQ). Ser1315 carries the post-translational modification Phosphoserine. N6-acetyllysine is present on Lys1335. The region spanning 1339–1443 (RRQSLELQKC…QCLVALLHKH (105 aa)) is the Bromo domain. Phosphoserine is present on residues Ser1342 and Ser1468. The interval 1455-1483 (KKFPDRLAEDEGDSEPEAVGQSRGRRQKK) is disordered.

This sequence belongs to the WAL family. BAZ1B subfamily. Component of the WICH-1 ISWI chromatin remodeling complex, at least composed of SMARCA1 and BAZ1B/WSTF, which regulates the spacing of histone octamers on the DNA template to facilitate access to DNA. Within the WICH-1 ISWI chromatin remodeling complex interacts with SMARCA1; the interaction is direct. Component of the WICH-5 ISWI chromatin remodeling complex (also called the WICH complex), at least composed of SMARCA5/SNF2H and BAZ1B/WSTF, which regulates the spacing of histone octamers on the DNA template to facilitate access to DNA. Within the WICH-5 ISWI chromatin remodeling complex interacts with SMARCA5/SNF2H; the interaction is direct. Component of the B-WICH chromatin remodeling complex, at least composed of SMARCA5/SNF2H, BAZ1B/WSTF, SF3B1, DEK, MYO1C, ERCC6, MYBBP1A and DDX21. Within the B-WICH chromatin remodeling complex, interacts with SMARCA5/SNF2H, DDX21, DEK, MYBBP1A, SF3B1, ERCC6 and MYO1C. Interacts with PCNA; the interaction is direct and is required for BAZ1B/WSTF binding to replication foci during S phase. Interacts with CDT1. The cofactor is Mn(2+). In terms of tissue distribution, ubiquitously expressed with high levels of expression in heart, brain, placenta, skeletal muscle and ovary.

The protein localises to the nucleus. It catalyses the reaction L-tyrosyl-[protein] + ATP = O-phospho-L-tyrosyl-[protein] + ADP + H(+). Atypical tyrosine-protein kinase that plays a central role in chromatin remodeling and acts as a transcription regulator. Involved in DNA damage response by phosphorylating 'Tyr-142' of histone H2AX (H2AXY142ph). H2AXY142ph plays a central role in DNA repair and acts as a mark that distinguishes between apoptotic and repair responses to genotoxic stress. Regulatory subunit of the ATP-dependent WICH-1 and WICH-5 ISWI chromatin remodeling complexes, which form ordered nucleosome arrays on chromatin and facilitate access to DNA during DNA-templated processes such as DNA replication, transcription, and repair. Both complexes regulate the spacing of nucleosomes along the chromatin and have the ability to slide mononucleosomes to the center of a DNA template. The WICH-1 ISWI chromatin remodeling complex has a lower ATP hydrolysis rate than the WICH-5 ISWI chromatin remodeling complex. The WICH-5 ISWI chromatin-remodeling complex regulates the transcription of various genes, has a role in RNA polymerase I transcription. Within the B-WICH complex has a role in RNA polymerase III transcription. Mediates the recruitment of the WICH-5 ISWI chromatin remodeling complex to replication foci during DNA replication. In Homo sapiens (Human), this protein is Tyrosine-protein kinase BAZ1B (BAZ1B).